The following is a 249-amino-acid chain: Testis-expressed protein 101 (249 aa).

The first 25 residues, 1 to 25 (MGTPRIQHLLILLVLGASLLTSGLE), serve as a signal peptide directing secretion. N-linked (GlcNAc...) asparagine glycans are attached at residues asparagine 45 and asparagine 159. A UPAR/Ly6 domain is found at 140 to 211 (CPTCVALGTC…PMFVREACPH (72 aa)). Asparagine 222 is lipidated: GPI-anchor amidated asparagine. Residues 223 to 249 (GATCLPIPVWGLQLLLPLLLPSFIHFS) constitute a propeptide, removed in mature form.

As to quaternary structure, interacts with VAMP3. Interacts with LY6K. Interacts with DPEP3; co-localized on the cell surface of spermatocytes, spermatids, and testicular spermatozoa, co-localized only in cytoplasmic droplets of caput and corpus epididymal sperm. Interacts with ADAM5. In terms of processing, N-glycosylated; by high mannose and/or biantennary complex and/or certain types of hybrid oligosaccharides; possesses different oligosaccharides chains according to its subcellular localization in the testis. Post-translationally, sheds from membrane raft by ACE and released from the cell surface of epididymal sperm while it passes through the caput epididymis leading to disappearance of TEX101 on spermatozoa; is essential to produce fertile spermatozoa. Detected in testis and spermatogonia. Not detected in spermatocytes. Detected in blood leukocytes.

The protein resides in the cell membrane. It localises to the membrane raft. The protein localises to the cytoplasmic vesicle. Its subcellular location is the secretory vesicle. It is found in the acrosome. The protein resides in the secreted. Plays a role in fertilization by controlling binding of sperm to zona pellucida and migration of spermatozoa into the oviduct. May play a role in signal transduction and promote protein tyrosine phosphorylation. The protein is Testis-expressed protein 101 of Homo sapiens (Human).